We begin with the raw amino-acid sequence, 215 residues long: L-fuculose phosphate aldolase (215 aa).

Substrate contacts are provided by residues 28–29, 43–44, and 71–72; these read GN, TG, and SS. The Proton donor/acceptor role is filled by glutamate 73. Zn(2+)-binding residues include glutamate 73, histidine 92, histidine 94, and histidine 155.

It belongs to the aldolase class II family. AraD/FucA subfamily. As to quaternary structure, homotetramer. Requires Zn(2+) as cofactor.

The catalysed reaction is L-fuculose 1-phosphate = (S)-lactaldehyde + dihydroxyacetone phosphate. It participates in carbohydrate degradation; L-fucose degradation; L-lactaldehyde and glycerone phosphate from L-fucose: step 3/3. Functionally, involved in the degradation of L-fucose and D-arabinose. Catalyzes the reversible cleavage of L-fuculose 1-phosphate (Fuc1P) to yield dihydroxyacetone phosphate (DHAP) and L-lactaldehyde. This chain is L-fuculose phosphate aldolase, found in Escherichia coli O6:H1 (strain CFT073 / ATCC 700928 / UPEC).